The following is a 755-amino-acid chain: Histone-lysine N-methyltransferase, H3 lysine-9 specific SUVH8 (755 aa).

Disordered stretches follow at residues 62–98 and 111–243; these read YDRD…PPQT and YDRD…KMVI. Composition is skewed to basic and acidic residues over residues 73–86 and 122–135; these read VHRE…EEAH and IDRE…EDAH. The segment at residues 174–186 is a DNA-binding region (a.T hook); it reads KRGRGRPKGSKNG. The segment covering 174 to 193 has biased composition (basic residues); the sequence is KRGRGRPKGSKNGSRKPKKP. Residues 197–207 show a composition bias toward polar residues; sequence DNNSTDASAGP. The span at 212–231 shows a compositional bias: basic residues; that stretch reads GKRRCGRPKGLKNRSRKPKK. The 139-residue stretch at 310–448 folds into the YDG domain; that stretch reads GPIPGVQVGD…FKEYRFKLLR (139 aa). One can recognise a Pre-SET domain in the interval 528 to 578; sequence QSLVQSYIHQNCTCILKNCGQLPYHDNILVCRKPLIYECGGSCPTRMVETG. An SET domain is found at 581-723; the sequence is LHLEVFKTSN…PMTELTYDYG (143 aa). S-adenosyl-L-methionine contacts are provided by residues 591 to 593, Asp624, Tyr626, Arg676, and 679 to 680; these read CGW and NH. Residues Cys682, Cys743, Cys745, and Cys750 each contribute to the Zn(2+) site. In terms of domain architecture, Post-SET spans 739-755; that stretch reads GKKICLCGSVKCRGSFG.

The protein belongs to the class V-like SAM-binding methyltransferase superfamily. Histone-lysine methyltransferase family. Suvar3-9 subfamily.

The protein localises to the nucleus. The protein resides in the chromosome. Its subcellular location is the centromere. The enzyme catalyses N(6)-methyl-L-lysyl(9)-[histone H3] + S-adenosyl-L-methionine = N(6),N(6)-dimethyl-L-lysyl(9)-[histone H3] + S-adenosyl-L-homocysteine + H(+). It catalyses the reaction L-lysyl(9)-[histone H3] + S-adenosyl-L-methionine = N(6)-methyl-L-lysyl(9)-[histone H3] + S-adenosyl-L-homocysteine + H(+). In terms of biological role, histone methyltransferase. Methylates 'Lys-9' of histone H3. H3 'Lys-9' methylation represents a specific tag for epigenetic transcriptional repression. This chain is Histone-lysine N-methyltransferase, H3 lysine-9 specific SUVH8 (SUVH8), found in Arabidopsis thaliana (Mouse-ear cress).